The chain runs to 520 residues: MVSVPTGLRPSAVPGVRLPALADQVGAVMAGPDRRAAVPDVTVTGVTLRAQDVLPGDLFAALPGATTHGARHAAEAIERGAVAVLTDAAGVAQLTGGRTTPTLLHPRPRSVLGELAAAVYAHPSERLTVIGITGTSGKTTTTYLVESGLRAAGRTAGLIGTVGIRIDGADIPSALTTPEAPALQALLAAMAEQRVDTVVMEVSSHALALGRVDGTRFAVGGFTNLSRDHLDFHPTMADYFEAKALLFDPNSPLRAHRAVVCIDDEAGREMAARAGDAVTVSAEGQPAHWRAVEVAPLGTGGQQFTVIDPAGVQHRAGIRLPGHYNVANCLVALALLDAVGVSPEQAAPGLLQTRVPGRMEEIDAGQDFLALVDYAHKPGALRAVLSSLKRPDRRLAVVFGAGGERDPGKRAPMGATAAELADLVVVTDDNPRGEDPAAIRREILAGATESGCAAEVIEIGDRRAAIRHAVAWAGPGDVVLVAGKGHETGQRTGEHTRPFDDRVELAEALREAVGPRKAQG.

L48 is a binding site for UDP-N-acetyl-alpha-D-muramoyl-L-alanyl-D-glutamate. 134-140 (GTSGKTT) is a binding site for ATP. UDP-N-acetyl-alpha-D-muramoyl-L-alanyl-D-glutamate contacts are provided by residues 176–177 (TT), S203, and R211. The residue at position 243 (K243) is an N6-carboxylysine. Residues R405, 429–432 (DNPR), G483, and E487 each bind meso-2,6-diaminopimelate. The short motif at 429 to 432 (DNPR) is the Meso-diaminopimelate recognition motif element.

This sequence belongs to the MurCDEF family. MurE subfamily. Requires Mg(2+) as cofactor. Carboxylation is probably crucial for Mg(2+) binding and, consequently, for the gamma-phosphate positioning of ATP.

The protein localises to the cytoplasm. It carries out the reaction UDP-N-acetyl-alpha-D-muramoyl-L-alanyl-D-glutamate + meso-2,6-diaminopimelate + ATP = UDP-N-acetyl-alpha-D-muramoyl-L-alanyl-gamma-D-glutamyl-meso-2,6-diaminopimelate + ADP + phosphate + H(+). It participates in cell wall biogenesis; peptidoglycan biosynthesis. Catalyzes the addition of meso-diaminopimelic acid to the nucleotide precursor UDP-N-acetylmuramoyl-L-alanyl-D-glutamate (UMAG) in the biosynthesis of bacterial cell-wall peptidoglycan. This is UDP-N-acetylmuramoyl-L-alanyl-D-glutamate--2,6-diaminopimelate ligase from Mycobacterium avium (strain 104).